The chain runs to 342 residues: Farnesyl pyrophosphate synthase (342 aa).

Residues Lys-47, Arg-50, and Gln-86 each contribute to the isopentenyl diphosphate site. Mg(2+)-binding residues include Asp-93 and Asp-97. Arg-102 lines the dimethylallyl diphosphate pocket. Position 103 (Arg-103) interacts with isopentenyl diphosphate. 5 residues coordinate dimethylallyl diphosphate: Lys-190, Thr-191, Gln-229, Lys-246, and Lys-255.

Belongs to the FPP/GGPP synthase family. As to quaternary structure, homodimer. Mg(2+) serves as cofactor. As to expression, mostly expressed in roots and seeds, and to a lower extent, in leaves and stems.

The protein resides in the cytoplasm. The enzyme catalyses isopentenyl diphosphate + dimethylallyl diphosphate = (2E)-geranyl diphosphate + diphosphate. It catalyses the reaction isopentenyl diphosphate + (2E)-geranyl diphosphate = (2E,6E)-farnesyl diphosphate + diphosphate. It functions in the pathway isoprenoid biosynthesis; farnesyl diphosphate biosynthesis; farnesyl diphosphate from geranyl diphosphate and isopentenyl diphosphate: step 1/1. The protein operates within isoprenoid biosynthesis; geranyl diphosphate biosynthesis; geranyl diphosphate from dimethylallyl diphosphate and isopentenyl diphosphate: step 1/1. With respect to regulation, stimulated by methyl jasmonate (MeJA). Functionally, catalyzes the sequential condensation of isopentenyl pyrophosphate with the allylic pyrophosphates, dimethylallyl pyrophosphate, and then with the resultant geranylpyrophosphate to the ultimate product farnesyl pyrophosphate. Component of the triterpene saponins (e.g. ginsenosides or panaxosides) and phytosterols biosynthetic pathways. Promotes the accumulation of ginsenosides. The chain is Farnesyl pyrophosphate synthase from Panax ginseng (Korean ginseng).